Consider the following 805-residue polypeptide: Translation initiation factor IF-2 (805 aa).

Disordered stretches follow at residues 68-89 and 141-215; these read VVTE…EKKE and KEKE…KEKK. Residues 79-89 are compositionally biased toward basic and acidic residues; sequence VEEKKEEEKKE. Residues 306–474 form the tr-type G domain; sequence PRPPIVVVMG…MILLLADILE (169 aa). Positions 315-322 are G1; the sequence is GHVDHGKT. Residue 315-322 coordinates GTP; that stretch reads GHVDHGKT. Residues 340–344 are G2; that stretch reads GITQH. A G3 region spans residues 362–365; it reads DTPG. Residues 362–366 and 416–419 each bind GTP; these read DTPGH and NKID. The G4 stretch occupies residues 416 to 419; the sequence is NKID. The interval 452 to 454 is G5; it reads SAK.

This sequence belongs to the TRAFAC class translation factor GTPase superfamily. Classic translation factor GTPase family. IF-2 subfamily.

It is found in the cytoplasm. Its function is as follows. One of the essential components for the initiation of protein synthesis. Protects formylmethionyl-tRNA from spontaneous hydrolysis and promotes its binding to the 30S ribosomal subunits. Also involved in the hydrolysis of GTP during the formation of the 70S ribosomal complex. This Aquifex aeolicus (strain VF5) protein is Translation initiation factor IF-2 (infB).